A 474-amino-acid polypeptide reads, in one-letter code: 6-phospho-beta-galactosidase (474 aa).

Gln19, His116, Asn159, Glu160, and Asn297 together coordinate D-galactose 6-phosphate. The active-site Proton donor is the Glu160. Catalysis depends on Glu375, which acts as the Nucleophile. 4 residues coordinate D-galactose 6-phosphate: Ser433, Trp434, Lys440, and Tyr442.

It belongs to the glycosyl hydrolase 1 family.

The catalysed reaction is a 6-phospho-beta-D-galactoside + H2O = D-galactose 6-phosphate + an alcohol. It functions in the pathway carbohydrate metabolism; lactose degradation; D-galactose 6-phosphate and beta-D-glucose from lactose 6-phosphate: step 1/1. The chain is 6-phospho-beta-galactosidase from Lacticaseibacillus rhamnosus (Lactobacillus rhamnosus).